The primary structure comprises 118 residues: Protein LH1 (118 aa).

The protein is Protein LH1 of Snake adenovirus serotype 1 (SnAdV-1).